A 509-amino-acid polypeptide reads, in one-letter code: MPIRLHIFVNSARHAINSSAFICRFIAYHLSPLLIHLSYFLIIDILGFVSLVVLRPSNHKYNPRYVDMFFLSTSAVTVIGLATIQMEDLSSSQIAILTLLMFLDSKMFLSFLGLVLESSKQNKHDPENRRVSSVTVCKQSQLEEATPQTPSMNSIDIKKRCLKYLVFVVLAYMIIILVTGSLLVFMYIAHVSSARDVLTRKSINKALFSISVTVSSFTNGGLLPTNESMVVFSSNNGLLLLLIGQILAGSTLFPVFLRLVIWALRGLRLAKAEEPDFMMNNSSAVGFSHLLPNLQTIFLAVVEVAFVAMTVILFCCLNWDSVVFAGLSSLQKITNALFMAVNARQAGENSIDCSLVAPAALVLFMVMMYTPSLTKLFSACQDHKRIGPESDDRTSKGKPFLKMMAFSPLGFNTTVIMLVCITERRSLSTDPLNLSTFNIIFEVISAYGNIGLSTGYSCSRQLQHQEGIACHEKAYNFSGWWSEPGKLILVLAMLCGRLNSKDSTSARTR.

At 1–32 (MPIRLHIFVNSARHAINSSAFICRFIAYHLSP) the chain is on the cytoplasmic side. Helical transmembrane passes span 33–53 (LLIHLSYFLIIDILGFVSLVV) and 96–116 (ILTLLMFLDSKMFLSFLGLVL). At 117 to 164 (ESSKQNKHDPENRRVSSVTVCKQSQLEEATPQTPSMNSIDIKKRCLKY) the chain is on the cytoplasmic side. The next 2 membrane-spanning stretches (helical) occupy residues 165–185 (LVFVVLAYMIIILVTGSLLVF) and 237–257 (GLLLLLIGQILAGSTLFPVFL). The Cytoplasmic segment spans residues 258 to 296 (RLVIWALRGLRLAKAEEPDFMMNNSSAVGFSHLLPNLQT). 2 consecutive transmembrane segments (helical) span residues 297–317 (IFLAVVEVAFVAMTVILFCCL) and 353–373 (CSLVAPAALVLFMVMMYTPSL). The Cytoplasmic portion of the chain corresponds to 374–400 (TKLFSACQDHKRIGPESDDRTSKGKPF). 2 helical membrane-spanning segments follow: residues 401–421 (LKMMAFSPLGFNTTVIMLVCI) and 474–494 (AYNFSGWWSEPGKLILVLAML). Residues 495-509 (CGRLNSKDSTSARTR) lie on the Cytoplasmic side of the membrane.

This sequence belongs to the TrkH potassium transport family. HKT (TC 2.A.38.3) subfamily.

It localises to the membrane. Probable cation transporter. May be involved in regulation of potassium-sodium homeostasis. The chain is Probable cation transporter HKT2;3 from Oryza sativa subsp. japonica (Rice).